Here is a 388-residue protein sequence, read N- to C-terminus: 3-oxo-Delta(4,5)-steroid 5-beta-reductase (388 aa).

At Ser2 the chain carries N-acetylserine. Residues 35–37, 63–64, 81–82, Thr105, and Gln143 contribute to the NADP(+) site; these read TGI, RR, and DV. Active-site residues include Lys147 and Tyr178. Residues Tyr178, Ile205, and 212–214 contribute to the NADP(+) site; that span reads SLM.

This sequence belongs to the short-chain dehydrogenases/reductases (SDR) family. Highly divergent. In terms of assembly, homodimer. In terms of tissue distribution, expressed in roots, stems, leaves, flowers, seeds and siliques. Expressed in the vascular bundles.

The enzyme catalyses 5beta-cholestan-3-one + NADP(+) = cholest-4-en-3-one + NADPH + H(+). It catalyses the reaction 4,5beta-dihydrocortisone + NADP(+) = cortisone + NADPH + H(+). Involved in vascular strand development. Catalyzes the stereospecific conversion of progesterone to 5-beta-pregnane-3,20-dione. Can use progesterone, testosterone, 21-acetyl cortexone, 2-cyclohexenone, but-1-en-3-one, ethyl acrylate, ethylmethacrylate, cortisone and canarigenone as substrates, lower activity with 3-methyl-2-cyclohexenone and 3,5,5-trimethyl-2-cyclohexenone as substrate, and no activity with canarigenin, canarigenin digitoxoside and pregnenolone. May be involved in the formation of 5-beta phytoecdysteroids. In Arabidopsis thaliana (Mouse-ear cress), this protein is 3-oxo-Delta(4,5)-steroid 5-beta-reductase (VEP1).